The sequence spans 319 residues: Alpha-hemolysin (319 aa).

The signal sequence occupies residues 1–26 (MKTRIVSSVTTTLLLGSILMNPVANA).

It belongs to the aerolysin family. As to quaternary structure, self-assembles to form first a non-lytic oligomeric intermediate and then, a mushroom-shaped homoheptamer structure of 100 Angstroms in length and up to 100 Angstroms in diameter.

It localises to the secreted. Its function is as follows. Alpha-toxin binds to the membrane of eukaryotic cells resulting in the release of low-molecular weight molecules and leading to an eventual osmotic lysis. Inhibits host neutrophil chemotaxis to the lesion region. Heptamer oligomerization and pore formation is required for lytic activity. The polypeptide is Alpha-hemolysin (hly) (Staphylococcus aureus (strain NCTC 8325 / PS 47)).